The sequence spans 479 residues: Ribosomal RNA small subunit methyltransferase F (479 aa).

S-adenosyl-L-methionine contacts are provided by residues 125-131 (AAAPGSK), Glu-149, Asp-176, and Asp-194. Catalysis depends on Cys-247, which acts as the Nucleophile.

Belongs to the class I-like SAM-binding methyltransferase superfamily. RsmB/NOP family.

It is found in the cytoplasm. It carries out the reaction cytidine(1407) in 16S rRNA + S-adenosyl-L-methionine = 5-methylcytidine(1407) in 16S rRNA + S-adenosyl-L-homocysteine + H(+). Its function is as follows. Specifically methylates the cytosine at position 1407 (m5C1407) of 16S rRNA. The protein is Ribosomal RNA small subunit methyltransferase F of Escherichia coli O17:K52:H18 (strain UMN026 / ExPEC).